The chain runs to 275 residues: Large ribosomal subunit protein uL2 (275 aa).

Residues 28–38 (RPYDGLLEKKS) are compositionally biased toward basic and acidic residues. 2 disordered regions span residues 28–58 (RPYD…GGGH) and 223–275 (VAMN…RKAK). Residues 254–275 (KGHKTRKNKRTDKLIVRRRKAK) show a composition bias toward basic residues.

The protein belongs to the universal ribosomal protein uL2 family. In terms of assembly, part of the 50S ribosomal subunit. Forms a bridge to the 30S subunit in the 70S ribosome.

One of the primary rRNA binding proteins. Required for association of the 30S and 50S subunits to form the 70S ribosome, for tRNA binding and peptide bond formation. It has been suggested to have peptidyltransferase activity; this is somewhat controversial. Makes several contacts with the 16S rRNA in the 70S ribosome. The sequence is that of Large ribosomal subunit protein uL2 from Chromohalobacter salexigens (strain ATCC BAA-138 / DSM 3043 / CIP 106854 / NCIMB 13768 / 1H11).